An 802-amino-acid chain; its full sequence is Potassium channel AKT2/3 (802 aa).

Residues methionine 1–glutamate 79 are Cytoplasmic-facing. Residues phenylalanine 80 to leucine 100 form a helical membrane-spanning segment. Topologically, residues asparagine 101 to cysteine 109 are extracellular. The chain crosses the membrane as a helical span at residues isoleucine 110–alanine 130. Residues tyrosine 131–threonine 153 lie on the Cytoplasmic side of the membrane. Residues tryptophan 154–glycine 174 traverse the membrane as a helical segment. The Extracellular portion of the chain corresponds to threonine 175–asparagine 183. Asparagine 179 is a glycosylation site (N-linked (GlcNAc...) asparagine). A helical; Voltage-sensor membrane pass occupies residues leucine 184–glutamate 204. The Cytoplasmic portion of the chain corresponds to lysine 205–arginine 218. A helical transmembrane segment spans residues leucine 219–aspartate 239. Residues arginine 240–isoleucine 265 lie on the Extracellular side of the membrane. The N-linked (GlcNAc...) asparagine glycan is linked to asparagine 254. The segment at residues alanine 266–alanine 285 is an intramembrane region (pore-forming). The Extracellular portion of the chain corresponds to serine 286–threonine 288. Residues isoleucine 289 to isoleucine 309 traverse the membrane as a helical segment. Over glycine 310–isoleucine 802 the chain is Cytoplasmic. Residue leucine 394–histidine 513 coordinates a nucleoside 3',5'-cyclic phosphate. 5 ANK repeats span residues asparagine 540–isoleucine 569, lysine 573–isoleucine 602, asparagine 606–histidine 636, isoleucine 637–threonine 666, and histidine 670–cysteine 699. In terms of domain architecture, KHA spans arginine 725–isoleucine 802.

It belongs to the potassium channel family. Plant (TC 1.A.1.4) subfamily. The potassium channel is probably composed of a homo- or heterotetrameric complex of pore-forming subunits. Interacts with the phosphatase PPC2A and the kinase CIPK6. May interact with AKT1, KAT1 and KAT3. Interacts with SLAC1. In terms of processing, dephosphorylated by PP2CA. As to expression, expressed mainly in the phloem tissues throughout the plant but also, at a lower level, in leaf epiderm, mesophyll and guard cells.

It is found in the endoplasmic reticulum membrane. Functionally, highly selective and weak inward-rectifying potassium channel. Plays a role in both loading and unloading potassium into/from the phloem sap. Seems to control sugar loading into phloem via a voltage-dependent process. Blocked by physiological concentrations of external calcium and by external acidification. May interact with the cytoskeleton or with regulatory proteins. Dephosphorylation by PP2CA not only leads to the inhibition of potassium currents but also to an increase of the voltage-dependence of the channel. Regulated by the CBL4/CIPK6 calcium sensor/protein kinase complex via a kinase interaction-dependent but phosphorylation-independent translocation of the channel to the plasma membrane. This is Potassium channel AKT2/3 (AKT2) from Arabidopsis thaliana (Mouse-ear cress).